The following is a 185-amino-acid chain: Male-enhanced antigen 1 (185 aa).

Disordered regions lie at residues 1–90 and 104–134; these read MGPE…VGDG and GLHL…IPMD. 2 stretches are compositionally biased toward acidic residues: residues 50-60 and 112-121; these read SSEEPEEEQEE and LESEDEDEEG. Phosphoserine is present on S114.

In terms of tissue distribution, highly expressed in testis.

In terms of biological role, may play an important role in spermatogenesis and/or testis development. The chain is Male-enhanced antigen 1 (MEA1) from Homo sapiens (Human).